We begin with the raw amino-acid sequence, 229 residues long: Uracil-DNA glycosylase (229 aa).

Catalysis depends on aspartate 64, which acts as the Proton acceptor.

It belongs to the uracil-DNA glycosylase (UDG) superfamily. UNG family.

Its subcellular location is the cytoplasm. It catalyses the reaction Hydrolyzes single-stranded DNA or mismatched double-stranded DNA and polynucleotides, releasing free uracil.. Excises uracil residues from the DNA which can arise as a result of misincorporation of dUMP residues by DNA polymerase or due to deamination of cytosine. This is Uracil-DNA glycosylase from Escherichia coli O45:K1 (strain S88 / ExPEC).